Reading from the N-terminus, the 136-residue chain is Protein PsiE homolog (136 aa).

Transmembrane regions (helical) follow at residues 15-35 (AMQT…IVFL), 58-78 (VEGL…VKYF), 83-103 (HFPL…LIII), and 108-128 (PMAV…LWLC).

It belongs to the PsiE family.

The protein localises to the cell inner membrane. The chain is Protein PsiE homolog from Klebsiella pneumoniae (strain 342).